The following is a 711-amino-acid chain: DNA topoisomerase 3 (711 aa).

Residues 2-135 (KSLILAEKPS…IKRLWISSVT (134 aa)) enclose the Toprim domain. Residues glutamate 8 and aspartate 104 each contribute to the Mg(2+) site. Residues 152 to 580 (FQHLYEAALA…EMKAFTQSIV (429 aa)) enclose the Topo IA-type catalytic domain. An interaction with DNA region spans residues 186–191 (SLGRVQ). Tyrosine 305 acts as the O-(5'-phospho-DNA)-tyrosine intermediate in catalysis. The tract at residues 672–699 (KRFKNKSSGKVSKKEMKKYMNNEDSLEN) is disordered. The segment covering 683–692 (SKKEMKKYMN) has biased composition (basic and acidic residues).

This sequence belongs to the type IA topoisomerase family. It depends on Mg(2+) as a cofactor.

The enzyme catalyses ATP-independent breakage of single-stranded DNA, followed by passage and rejoining.. In terms of biological role, releases the supercoiling and torsional tension of DNA, which is introduced during the DNA replication and transcription, by transiently cleaving and rejoining one strand of the DNA duplex. Introduces a single-strand break via transesterification at a target site in duplex DNA. The scissile phosphodiester is attacked by the catalytic tyrosine of the enzyme, resulting in the formation of a DNA-(5'-phosphotyrosyl)-enzyme intermediate and the expulsion of a 3'-OH DNA strand. The free DNA strand then undergoes passage around the unbroken strand, thus removing DNA supercoils. Finally, in the religation step, the DNA 3'-OH attacks the covalent intermediate to expel the active-site tyrosine and restore the DNA phosphodiester backbone. The polypeptide is DNA topoisomerase 3 (Staphylococcus haemolyticus (strain JCSC1435)).